The sequence spans 626 residues: Transketolase-like protein 2 (626 aa).

Thiamine diphosphate contacts are provided by residues Ser41, His78, and 124–126 (GSL). Position 156 (Asp156) interacts with Mg(2+). Thiamine diphosphate contacts are provided by Gly157 and Asn186. Residues Asn186 and Leu188 each coordinate Mg(2+). Residues Lys248 and His262 each coordinate thiamine diphosphate. Substrate is bound by residues His262 and Ser349. Positions 370 and 396 each coordinate thiamine diphosphate. The Proton donor role is filled by Glu370. Substrate contacts are provided by His420 and Asp428. Gln432 serves as a coordination point for thiamine diphosphate.

This sequence belongs to the transketolase family. In terms of assembly, homodimer. Mg(2+) serves as cofactor. Requires Ca(2+) as cofactor. The cofactor is Mn(2+). Co(2+) is required as a cofactor. It depends on thiamine diphosphate as a cofactor. In terms of tissue distribution, overexpressed in hepatoma cancer cells.

It carries out the reaction D-sedoheptulose 7-phosphate + D-glyceraldehyde 3-phosphate = aldehydo-D-ribose 5-phosphate + D-xylulose 5-phosphate. In terms of biological role, plays an essential role in total transketolase activity and cell proliferation in cancer cells; after transfection with anti-TKTL1 siRNA, total transketolase activity dramatically decreases and proliferation was significantly inhibited in cancer cells. Plays a pivotal role in carcinogenesis. This Homo sapiens (Human) protein is Transketolase-like protein 2 (TKTL2).